Consider the following 363-residue polypeptide: Spermidine/putrescine import ATP-binding protein PotA (363 aa).

One can recognise an ABC transporter domain in the interval 6-236 (VEFKNVIKKY…PINHFVADFI (231 aa)). 38–45 (GPSGCGKT) contacts ATP.

The protein belongs to the ABC transporter superfamily. Spermidine/putrescine importer (TC 3.A.1.11.1) family. The complex is composed of two ATP-binding proteins (PotA), two transmembrane proteins (PotB and PotC) and a solute-binding protein (PotD).

The protein resides in the cell membrane. It catalyses the reaction ATP + H2O + polyamine-[polyamine-binding protein]Side 1 = ADP + phosphate + polyamineSide 2 + [polyamine-binding protein]Side 1.. Its function is as follows. Part of the ABC transporter complex PotABCD involved in spermidine/putrescine import. Responsible for energy coupling to the transport system. In Latilactobacillus sakei subsp. sakei (strain 23K) (Lactobacillus sakei subsp. sakei), this protein is Spermidine/putrescine import ATP-binding protein PotA.